Here is a 238-residue protein sequence, read N- to C-terminus: 1-(5-phosphoribosyl)-5-[(5-phosphoribosylamino)methylideneamino] imidazole-4-carboxamide isomerase (238 aa).

D8 acts as the Proton acceptor in catalysis. The active-site Proton donor is D129.

Belongs to the HisA/HisF family.

It localises to the cytoplasm. It carries out the reaction 1-(5-phospho-beta-D-ribosyl)-5-[(5-phospho-beta-D-ribosylamino)methylideneamino]imidazole-4-carboxamide = 5-[(5-phospho-1-deoxy-D-ribulos-1-ylimino)methylamino]-1-(5-phospho-beta-D-ribosyl)imidazole-4-carboxamide. Its pathway is amino-acid biosynthesis; L-histidine biosynthesis; L-histidine from 5-phospho-alpha-D-ribose 1-diphosphate: step 4/9. This Clostridium kluyveri (strain NBRC 12016) protein is 1-(5-phosphoribosyl)-5-[(5-phosphoribosylamino)methylideneamino] imidazole-4-carboxamide isomerase.